Here is a 497-residue protein sequence, read N- to C-terminus: MRWNKKNVISLVSKSHHLPAPITPPLPEIYRIPNPPPKLPEISIPPTLTLSPSPKHSNFVNFLENNLPHHQTLTPQTLLGFLRSKIRNHPLYAHYDFAVFNWAATLDTFRHDHDSFLWMSRSLAATHRFDDLYRLLSFVAANPCPCSSGIFSCPELEPIFRSAIDAYCRARKMDYALLAFDTMKRLIDGKPNVGVYNTVVNGYVKSGDMDKALRFYQRMGKERAKPDVCTFNILINGYCRSSKFDLALDLFREMKEKGCEPNVVSFNTLIRGFLSSGKIEEGVKMAYEMIELGCRFSEATCEILVDGLCREGRVDDACGLVLDLLNKRVLPSEFDYGSLVEKLCGENKAVRAMEMMEELWKKGQTPCFIACTTLVEGLRKSGRTEKASGFMEKMMNAGILPDSVTFNLLLRDLCSSDHSTDANRLRLLASSKGYEPDETTYHVLVSGFTKEGRRKEGEVLVNEMLDKDMLPDIFTYNRLMDGLSCTGKFSRKQVRML.

9 PPR repeats span residues 156 to 186 (LEPI…MKRL), 192 to 226 (NVGV…RAKP), 227 to 261 (DVCT…GCEP), 262 to 296 (NVVS…GCRF), 297 to 331 (SEAT…RVLP), 332 to 366 (SEFD…GQTP), 367 to 401 (CFIA…GILP), 402 to 436 (DSVT…GYEP), and 437 to 471 (DETT…DMLP).

The protein belongs to the PPR family. P subfamily.

This is Pentatricopeptide repeat-containing protein At2g36240 from Arabidopsis thaliana (Mouse-ear cress).